The following is a 315-amino-acid chain: Ribosomal RNA small subunit methyltransferase H (315 aa).

The interval 1-21 is disordered; that stretch reads MNVVNVVPMHLPPPPPRPRGE. S-adenosyl-L-methionine contacts are provided by residues 51-53, Asp-69, Phe-96, Asp-117, and Gln-124; that span reads GGH. The tract at residues 281–315 is disordered; sequence KKPVTAGDDEVEGNPRARSAKLRAARRVGGAEALA.

This sequence belongs to the methyltransferase superfamily. RsmH family.

It localises to the cytoplasm. The enzyme catalyses cytidine(1402) in 16S rRNA + S-adenosyl-L-methionine = N(4)-methylcytidine(1402) in 16S rRNA + S-adenosyl-L-homocysteine + H(+). Its function is as follows. Specifically methylates the N4 position of cytidine in position 1402 (C1402) of 16S rRNA. This Sorangium cellulosum (strain So ce56) (Polyangium cellulosum (strain So ce56)) protein is Ribosomal RNA small subunit methyltransferase H.